Consider the following 173-residue polypeptide: Catabolic 3-dehydroquinase (173 aa).

Tyr-26 acts as the Proton acceptor in catalysis. The substrate site is built by Asn-102, His-108, and Asp-115. His-128 functions as the Proton donor in the catalytic mechanism. Residues 129-130 (VS) and Arg-139 each bind substrate.

Belongs to the type-II 3-dehydroquinase family. As to quaternary structure, homododecamer. Adopts a ring-like structure, composed of an arrangement of two hexameric rings stacked on top of one another.

The catalysed reaction is 3-dehydroquinate = 3-dehydroshikimate + H2O. The protein operates within aromatic compound metabolism; 3,4-dihydroxybenzoate biosynthesis; 3,4-dihydroxybenzoate from 3-dehydroquinate: step 1/2. Functionally, 3-dehydroquinate dehydratase; part of the qa gene cluster that mediates the catabolism of quinic acid (QA) and as such, allows the use of QA as a sole carbon source. Catalyzes the second reaction in the inducible quinic acid catabolic pathway by converting 3-dehydroquinate into 3-dehydroshikimate. The qa cluster encodes 3 inducible enymes (qa-2, qa-3 and qa-4) catalyzing the first three reactions in the catabolism of quinic acid to protocatechuic acid (also known as 3,4-Dihydroxybenzoic acid). This Neurospora crassa (strain ATCC 24698 / 74-OR23-1A / CBS 708.71 / DSM 1257 / FGSC 987) protein is Catabolic 3-dehydroquinase.